The chain runs to 1311 residues: Cyclin-G-associated kinase (1311 aa).

The residue at position 2 (serine 2) is an N-acetylserine. 2 positions are modified to phosphoserine: serine 2 and serine 16. Residues 40–314 (LRVRRVLAEG…SIAEVVHQLQ (275 aa)) enclose the Protein kinase domain. Aspartate 173 serves as the catalytic Proton acceptor. Residues 399–566 (SVANYAKGDL…EYMCDMVAEE (168 aa)) enclose the Phosphatase tensin-type domain. Phosphoserine is present on serine 456. The C2 tensin-type domain occupies 572–710 (SKPILVRAVV…FQVNLEVEVE (139 aa)). Disordered stretches follow at residues 709–729 (VEPRDRPSREAPPWENSSMRG) and 749–788 (FGKPELPRQPGSTAQYDAGAGSPEAEPTDSDSPPSSSADA). The residue at position 770 (serine 770) is a Phosphoserine. Residues 770–788 (SPEAEPTDSDSPPSSSADA) are compositionally biased toward low complexity. A Phosphothreonine modification is found at threonine 776. A Phosphoserine modification is found at serine 783. Phosphothreonine is present on threonine 794. Disordered stretches follow at residues 801 to 860 (KEAE…VQQD), 913 to 1035 (CLLG…DLLG), and 1047 to 1150 (AVAP…PNYA). Phosphoserine occurs at positions 811, 826, 829, 834, and 939. Low complexity-rich tracts occupy residues 925–939 (PPEDLLSEDPLLLAS) and 950–966 (PRGGPPAAADPFGPLLP). 2 stretches are compositionally biased toward polar residues: residues 967–976 (SSGNNSQPCS) and 1070–1080 (SQASWTKSQNP). Position 1096 is a phosphoserine (serine 1096). The span at 1109 to 1124 (TATTPKGSSSWQTSRP) shows a compositional bias: polar residues. Arginine 1123 is modified (omega-N-methylarginine). A phosphoserine mark is found at serine 1176 and serine 1185. A J domain is found at 1247-1311 (SRWTPVGMAD…FENQGSRPLF (65 aa)).

Belongs to the protein kinase superfamily. Ser/Thr protein kinase family. As to expression, ubiquitous. Highest in testis.

Its subcellular location is the cytoplasm. It localises to the perinuclear region. It is found in the golgi apparatus. The protein localises to the trans-Golgi network. The protein resides in the cell junction. Its subcellular location is the focal adhesion. It localises to the cytoplasmic vesicle. It is found in the clathrin-coated vesicle. It carries out the reaction L-seryl-[protein] + ATP = O-phospho-L-seryl-[protein] + ADP + H(+). The catalysed reaction is L-threonyl-[protein] + ATP = O-phospho-L-threonyl-[protein] + ADP + H(+). Associates with cyclin G and CDK5. Seems to act as an auxilin homolog that is involved in the uncoating of clathrin-coated vesicles by Hsc70 in non-neuronal cells. Expression oscillates slightly during the cell cycle, peaking at G1. May play a role in clathrin-mediated endocytosis and intracellular trafficking, and in the dynamics of clathrin assembly/disassembly. The protein is Cyclin-G-associated kinase of Homo sapiens (Human).